A 724-amino-acid polypeptide reads, in one-letter code: Degenerin mec-10 (724 aa).

The Cytoplasmic segment spans residues 1-125 (MNRGPPNPRM…GQAPNSLYRA (125 aa)). The chain crosses the membrane as a helical span at residues 126–146 (VWVFLLLICAIQFINQAVAVI). At 147–684 (QKYQKMDKIT…FGGHLGLWSG (538 aa)) the chain is on the extracellular side. Asn294, Asn370, Asn463, Asn605, and Asn624 each carry an N-linked (GlcNAc...) asparagine glycan. Residues 685 to 705 (VSVMTCCEFVCLVLELLYMAV) form a helical membrane-spanning segment. Residues 706–724 (THHITQERIRRRENAANEF) are Cytoplasmic-facing.

It belongs to the amiloride-sensitive sodium channel (TC 1.A.6) family. In terms of assembly, the channel is probably composed of at least the mec-2, mec-4, mec-6 and mec-10 subunits.

The protein resides in the cell membrane. In terms of biological role, amiloride-sensitive sodium channel subunit required for mechanosensory transduction (touch sensitivity). Negatively regulates the turning step of male mating behavior. The sequence is that of Degenerin mec-10 from Caenorhabditis briggsae.